Here is an 87-residue protein sequence, read N- to C-terminus: uncharacterized protein (87 aa).

A 2Fe-2S ferredoxin-type domain is found at 4 to 87; the sequence is SKIIILNNNK…TISGSILIKI (84 aa). The [2Fe-2S] cluster site is built by Cys39, Cys44, Cys47, and Cys75.

[2Fe-2S] cluster serves as cofactor.

This is an uncharacterized protein from Buchnera aphidicola subsp. Baizongia pistaciae (strain Bp).